Reading from the N-terminus, the 173-residue chain is Mesencephalic astrocyte-derived neurotrophic factor homolog (173 aa).

The N-terminal stretch at 1-22 (MNTSQIVLMFCLVVGVAQTALA) is a signal peptide. 4 disulfide bridges follow: Cys28/Cys114, Cys31/Cys103, Cys61/Cys72, and Cys148/Cys151.

Belongs to the ARMET family.

Its subcellular location is the secreted. Its function is as follows. Required during the maturation of the embryonic nervous system for maintenance of neuronal and cuticular connectivity. Essential for maintenance of dopaminergic neurons and dopamine levels. The protein is Mesencephalic astrocyte-derived neurotrophic factor homolog of Drosophila grimshawi (Hawaiian fruit fly).